The following is a 124-amino-acid chain: MAITKDDILEAVGAMSVMELNDLVKAFEEKFGVSAAAVAVAGPAAAGGAAAAEEQTEFTVTLKSAGANKVGVIKAVREITGLGLKEAKDLVDGAPKPVKEGVDKKTADELVKKLVEAGAEAEAK.

Belongs to the bacterial ribosomal protein bL12 family. Homodimer. Part of the ribosomal stalk of the 50S ribosomal subunit. Forms a multimeric L10(L12)X complex, where L10 forms an elongated spine to which 2 to 4 L12 dimers bind in a sequential fashion. Binds GTP-bound translation factors.

Its function is as follows. Forms part of the ribosomal stalk which helps the ribosome interact with GTP-bound translation factors. Is thus essential for accurate translation. In Ralstonia pickettii (strain 12J), this protein is Large ribosomal subunit protein bL12.